We begin with the raw amino-acid sequence, 541 residues long: 2-hydroxyacylsphingosine 1-beta-galactosyltransferase (541 aa).

A signal peptide spans 1–20 (MKSYTPYFMLLWSAVGIARA). N78, N333, and N442 each carry an N-linked (GlcNAc...) asparagine glycan. Residues 472–492 (YFLLDIAFVLLLGAVALYFIV) form a helical membrane-spanning segment.

This sequence belongs to the UDP-glycosyltransferase family. In terms of tissue distribution, brain, restricted to the oligodendrocyte-containing cell layers of cerebrum and cerebellum.

The protein resides in the membrane. It is found in the endoplasmic reticulum. The catalysed reaction is an N-acylsphing-4-enine + UDP-alpha-D-galactose = a beta-D-galactosyl-(1&lt;-&gt;1')-N-acylsphing-4-enine + UDP + H(+). The enzyme catalyses N-(2-hydroxy-hexanoyl)-sphing-4-enine + UDP-alpha-D-galactose = N-(2-hydroxy-hexanoyl)-beta-D-galactosyl-sphing-4-enine + UDP + H(+). It catalyses the reaction N-(2-hydroxy-hexanoyl)-sphinganine + UDP-alpha-D-galactose = N-(2-hydroxyhexanoyl)-beta-D-galactosylsphinganine + UDP + H(+). It carries out the reaction an N-acyl-sphingoid base + UDP-alpha-D-galactose = a D-galactosylceramide + UDP + H(+). Its pathway is sphingolipid metabolism; galactosylceramide biosynthesis. In terms of biological role, catalyzes the transfer of galactose to ceramide, a key enzymatic step in the biosynthesis of galactocerebrosides, which are abundant sphingolipids of the myelin membrane of the central nervous system and peripheral nervous system. Galactosylates both hydroxy- and non-hydroxy fatty acid-containing ceramides and diglycerides. This is 2-hydroxyacylsphingosine 1-beta-galactosyltransferase from Rattus norvegicus (Rat).